Consider the following 92-residue polypeptide: YcgL domain-containing protein Shewana3_2381 (92 aa).

Residues 1-85 (MLCAVYKSSR…PQVNLLAEHR (85 aa)) form the YcgL domain.

This Shewanella sp. (strain ANA-3) protein is YcgL domain-containing protein Shewana3_2381.